Consider the following 450-residue polypeptide: FERM domain-containing protein 8 (450 aa).

An FERM domain is found at 28 to 373; the sequence is MDVIVYLIND…YCIELSQTTE (346 aa).

The protein localises to the cytoplasm. Its subcellular location is the cytosol. It localises to the cell membrane. In terms of biological role, promotes the cell surface stability of RHBDF1 and RHBDF2 and prevents their degradation via the endolysosomal pathway. By acting on RHBDF proteins, involved in ADAM17-mediated ligand shedding. May negatively regulate Wnt signaling. In Xenopus tropicalis (Western clawed frog), this protein is FERM domain-containing protein 8 (frmd8).